Here is a 155-residue protein sequence, read N- to C-terminus: Endoribonuclease YbeY (155 aa).

3 residues coordinate Zn(2+): His-113, His-117, and His-123.

It belongs to the endoribonuclease YbeY family. Requires Zn(2+) as cofactor.

Its subcellular location is the cytoplasm. In terms of biological role, single strand-specific metallo-endoribonuclease involved in late-stage 70S ribosome quality control and in maturation of the 3' terminus of the 16S rRNA. This is Endoribonuclease YbeY from Ureaplasma parvum serovar 3 (strain ATCC 27815 / 27 / NCTC 11736).